The following is a 369-amino-acid chain: Aminomethyltransferase (369 aa).

The protein belongs to the GcvT family. In terms of assembly, the glycine cleavage system is composed of four proteins: P, T, L and H.

The enzyme catalyses N(6)-[(R)-S(8)-aminomethyldihydrolipoyl]-L-lysyl-[protein] + (6S)-5,6,7,8-tetrahydrofolate = N(6)-[(R)-dihydrolipoyl]-L-lysyl-[protein] + (6R)-5,10-methylene-5,6,7,8-tetrahydrofolate + NH4(+). Functionally, the glycine cleavage system catalyzes the degradation of glycine. This is Aminomethyltransferase from Rippkaea orientalis (strain PCC 8801 / RF-1) (Cyanothece sp. (strain PCC 8801)).